The sequence spans 744 residues: Junctophilin-3 (744 aa).

The Cytoplasmic segment spans residues 1–723; it reads MSSGGRFNFD…LKSSTGSAPI (723 aa). 6 MORN repeats span residues 15–37, 39–60, 61–82, 83–105, 107–129, and 130–152; these read YCGG…KGQG, YTGS…SGNT, YQGT…GKWV, YKGE…GNGA, YEGT…DGGT, and YQGQ…PYGM. The tract at residues 230–252 is disordered; it reads SKSSLASQRSKQSSFRSEAGMST. Residues 231–244 show a composition bias toward low complexity; that stretch reads KSSLASQRSKQSSF. MORN repeat units lie at residues 288–310 and 311–333; these read YVGE…DGLK and YEGE…DGTK. Ser-440 carries the phosphoserine modification. A Phosphothreonine modification is found at Thr-451. 2 disordered regions span residues 451 to 603 and 624 to 677; these read TPLQ…LLEP and CPQD…ESLR. Phosphoserine is present on Ser-457. Position 471 is a phosphothreonine (Thr-471). 2 positions are modified to phosphoserine: Ser-475 and Ser-506. Residues Ser-699 and Ser-706 each carry the phosphoserine modification. The chain crosses the membrane as a helical; Anchor for type IV membrane protein span at residues 724–744; sequence LVVMVILLNIGVAILFINFFI.

Belongs to the junctophilin family. As to expression, specifically expressed in brain. Highest levels in the olfactory tubercle, caudate putamen, nucleus accumbens, hippocampal formation, piriform cortex and cerebellar cortex. Expressed in disctete neurons sites. In hippocampal formation, expressed in dendrites of hippocampal pyramidal and denate granule cells. In cerebellum, it is highly expressed in Purkinge cells, while it is weakly expressed in granular cells.

It is found in the cell membrane. It localises to the endoplasmic reticulum membrane. Functionally, junctophilins contribute to the formation of junctional membrane complexes (JMCs) which link the plasma membrane with the endoplasmic or sarcoplasmic reticulum in excitable cells. Provides a structural foundation for functional cross-talk between the cell surface and intracellular calcium release channels. JPH3 is brain-specific and appears to have an active role in certain neurons involved in motor coordination and memory. This is Junctophilin-3 (Jph3) from Mus musculus (Mouse).